A 213-amino-acid polypeptide reads, in one-letter code: Pyrrolidone-carboxylate peptidase (213 aa).

Active-site residues include glutamate 78, cysteine 141, and histidine 165.

Belongs to the peptidase C15 family. As to quaternary structure, homotetramer.

It is found in the cytoplasm. The enzyme catalyses Release of an N-terminal pyroglutamyl group from a polypeptide, the second amino acid generally not being Pro.. In terms of biological role, removes 5-oxoproline from various penultimate amino acid residues except L-proline. The protein is Pyrrolidone-carboxylate peptidase of Clostridium perfringens (strain 13 / Type A).